The following is a 78-amino-acid chain: Sec-independent protein translocase protein TatA (78 aa).

A helical transmembrane segment spans residues 1–21; the sequence is MGGISIWQLLIVALIVVLLFG. The interval 40 to 78 is disordered; it reads KSAMSSEEEKKAIEDSASEKTAQTEEKKTESKDKDKEQV. Basic and acidic residues predominate over residues 46–78; sequence EEEKKAIEDSASEKTAQTEEKKTESKDKDKEQV.

Belongs to the TatA/E family. In terms of assembly, the Tat system comprises two distinct complexes: a TatABC complex, containing multiple copies of TatA, TatB and TatC subunits, and a separate TatA complex, containing only TatA subunits. Substrates initially bind to the TatABC complex, which probably triggers association of the separate TatA complex to form the active translocon.

It localises to the cell inner membrane. Its function is as follows. Part of the twin-arginine translocation (Tat) system that transports large folded proteins containing a characteristic twin-arginine motif in their signal peptide across membranes. TatA could form the protein-conducting channel of the Tat system. The sequence is that of Sec-independent protein translocase protein TatA from Shewanella sediminis (strain HAW-EB3).